We begin with the raw amino-acid sequence, 47 residues long: Large ribosomal subunit protein bL27c-2 (47 aa).

This sequence belongs to the bacterial ribosomal protein bL27 family.

The protein localises to the plastid. The protein resides in the chloroplast. The chain is Large ribosomal subunit protein bL27c-2 from Cyanidium caldarium (Red alga).